The sequence spans 150 residues: Large ribosomal subunit protein bL9 (150 aa).

This sequence belongs to the bacterial ribosomal protein bL9 family.

Its function is as follows. Binds to the 23S rRNA. The chain is Large ribosomal subunit protein bL9 from Burkholderia thailandensis (strain ATCC 700388 / DSM 13276 / CCUG 48851 / CIP 106301 / E264).